Here is a 211-residue protein sequence, read N- to C-terminus: MRLTAKQVTWLKVCLHLAGLLPFLWLVWAINHGGLGADPVKDIQHFTGRTALKFLLATLLITPLARYAKQPLLIRTRRLLGLWCFAWATLHLTSYALLELGVNNLALLGKELITRPYLTLGIISWIILLALAFTSTQAMQRKLGKHWQQLHNFVYLVAILAPIHYLWSVKIISPQPLIYAGLAVLLLALRYKKSRSLFNRLRKQVHNKLSV.

The next 4 helical transmembrane spans lie at 10–30 (WLKVCLHLAGLLPFLWLVWAI), 82–102 (LWCFAWATLHLTSYALLELGV), 116–136 (PYLTLGIISWIILLALAFTST), and 153–173 (FVYLVAILAPIHYLWSVKIIS).

Belongs to the MsrQ family. Heterodimer of a catalytic subunit (MsrP) and a heme-binding subunit (MsrQ). FMN serves as cofactor. Requires heme b as cofactor.

Its subcellular location is the cell inner membrane. Its function is as follows. Part of the MsrPQ system that repairs oxidized periplasmic proteins containing methionine sulfoxide residues (Met-O), using respiratory chain electrons. Thus protects these proteins from oxidative-stress damage caused by reactive species of oxygen and chlorine generated by the host defense mechanisms. MsrPQ is essential for the maintenance of envelope integrity under bleach stress, rescuing a wide series of structurally unrelated periplasmic proteins from methionine oxidation, including the primary periplasmic chaperone SurA and the lipoprotein Pal. MsrQ provides electrons for reduction to the reductase catalytic subunit MsrP, using the quinone pool of the respiratory chain. The protein is Protein-methionine-sulfoxide reductase heme-binding subunit MsrQ of Escherichia coli O157:H7.